The following is a 373-amino-acid chain: Peptidoglycan recognition protein 4 (373 aa).

The first 17 residues, 1-17, serve as a signal peptide directing secretion; the sequence is MLPWLLVFSALGIQAWG. N-linked (GlcNAc...) asparagine glycans are attached at residues N22, N39, N109, N145, and N247. N-acetylmuramoyl-L-alanine amidase domains are found at residues 74–212 and 235–358; these read TPVN…ACPG and YGII…LSPG. Disulfide bonds link C210-C332, C226-C270, and C246-C252. Residues Y263 and Y274 each coordinate peptidoglycan. 2 interaction with murein regions span residues 293 to 302 and 353 to 354; these read QGSSTPGYDD and RT.

Belongs to the N-acetylmuramoyl-L-alanine amidase 2 family. Homodimer; disulfide-linked. Heterodimer with PGLYRP3; disulfide-linked. N-glycosylated. As to expression, detected in skin epidermis, eccrine sweat glands and ducts, mucous cells in the submandibular salivary gland, mucous cells in the throat, ciliary body epithelial cells of the eye, small intestine, colon, stomach and in mature epithelial cells of the tongue (at protein level). High expression in skin and esophagus. Expressed also to a much lesser extent in the tonsils and thymus.

It is found in the secreted. In terms of biological role, pattern receptor that binds to murein peptidoglycans (PGN) of Gram-positive bacteria. Has bactericidal activity towards Gram-positive bacteria. May kill Gram-positive bacteria by interfering with peptidoglycan biosynthesis. Also binds to Gram-negative bacteria, and has bacteriostatic activity towards Gram-negative bacteria. Plays a role in innate immunity. In Homo sapiens (Human), this protein is Peptidoglycan recognition protein 4 (PGLYRP4).